Reading from the N-terminus, the 20-residue chain is Lysozyme (20 aa).

Monomer.

It is found in the secreted. The enzyme catalyses Hydrolysis of (1-&gt;4)-beta-linkages between N-acetylmuramic acid and N-acetyl-D-glucosamine residues in a peptidoglycan and between N-acetyl-D-glucosamine residues in chitodextrins.. Its function is as follows. Has bacteriolytic activity. The chain is Lysozyme from Lysobacter sp. (strain XL1).